We begin with the raw amino-acid sequence, 256 residues long: Phosphatidylglycerol--prolipoprotein diacylglyceryl transferase (256 aa).

The next 3 membrane-spanning stretches (helical) occupy residues 19–39 (VHWY…LGYW), 56–76 (LIFY…MLFY), and 91–111 (IWEG…AAWL). Residue R139 coordinates a 1,2-diacyl-sn-glycero-3-phospho-(1'-sn-glycerol). The helical transmembrane segment at 231-251 (FGWLTMGQVLSIPMLLIGIWL) threads the bilayer.

This sequence belongs to the Lgt family.

It localises to the cell inner membrane. It carries out the reaction L-cysteinyl-[prolipoprotein] + a 1,2-diacyl-sn-glycero-3-phospho-(1'-sn-glycerol) = an S-1,2-diacyl-sn-glyceryl-L-cysteinyl-[prolipoprotein] + sn-glycerol 1-phosphate + H(+). It functions in the pathway protein modification; lipoprotein biosynthesis (diacylglyceryl transfer). In terms of biological role, catalyzes the transfer of the diacylglyceryl group from phosphatidylglycerol to the sulfhydryl group of the N-terminal cysteine of a prolipoprotein, the first step in the formation of mature lipoproteins. The protein is Phosphatidylglycerol--prolipoprotein diacylglyceryl transferase of Legionella pneumophila (strain Corby).